The primary structure comprises 203 residues: CASP-like protein 2U5 (203 aa).

Residues 1-31 (MSEHRIPVAADKQISPPISAGEQKGCKGLKR) lie on the Cytoplasmic side of the membrane. Residues 32–52 (TDLMLRFAAFVCCAVTMVVLI) form a helical membrane-spanning segment. Residues 53–84 (TDKQTSAIQVPGFNNLTITKTVSFDLAKAFVY) lie on the Extracellular side of the membrane. Asn67 carries an N-linked (GlcNAc...) asparagine glycan. Residues 85–105 (LVSAAGIGAGYTLLVLVLSII) form a helical membrane-spanning segment. At 106 to 111 (SAERSK) the chain is on the cytoplasmic side. A helical transmembrane segment spans residues 112-132 (AIAWFIFVFDQLITYVLLAAA). At 133–164 (AASTEVAYMGAHAPPEASWLKVCSLFGRFCHQ) the chain is on the extracellular side. The helical transmembrane segment at 165 to 185 (LGASLVTSFISTVLFAFSAAI) threads the bilayer. Residues 186-203 (SAYYLFSNTNVRPAYSKG) are Cytoplasmic-facing.

The protein belongs to the Casparian strip membrane proteins (CASP) family. In terms of assembly, homodimer and heterodimers.

It is found in the cell membrane. The protein is CASP-like protein 2U5 of Selaginella moellendorffii (Spikemoss).